A 63-amino-acid polypeptide reads, in one-letter code: Large ribosomal subunit protein bL35 (63 aa).

Belongs to the bacterial ribosomal protein bL35 family.

This is Large ribosomal subunit protein bL35 from Campylobacter hominis (strain ATCC BAA-381 / DSM 21671 / CCUG 45161 / LMG 19568 / NCTC 13146 / CH001A).